Reading from the N-terminus, the 599-residue chain is Thiamine transporter THI72 (599 aa).

Helical transmembrane passes span 42 to 62 (WGFW…GMWI), 78 to 98 (IGAF…NSCP), 112 to 132 (FVFG…MSIV), 174 to 194 (LIGF…KPYH), 197 to 217 (YILI…VIYL), 280 to 300 (IVAL…GASA), 333 to 353 (FFCG…NCGF), 372 to 392 (GAIF…YNSS), 395 to 415 (FLTV…VMIC), 447 to 467 (AIVA…WEVN), and 484 to 504 (SFFS…LFPF). Positions 553 to 599 (HEYKPESSDDELPELTKTSSENTKVFEIVHQKDNEKESSTSSEKQIA) are disordered. A phosphoserine mark is found at serine 560 and serine 572. Residues 579-590 (EIVHQKDNEKES) are compositionally biased toward basic and acidic residues.

It belongs to the purine-cytosine permease (2.A.39) family.

The protein resides in the membrane. Its function is as follows. Low affinity thiamine transporter responsible for intake of thiamine. It is possible that the primary function is the uptake of closely related compounds and that thiamine transport is a secondary activity of these proteins. The chain is Thiamine transporter THI72 (THI72) from Saccharomyces cerevisiae (strain ATCC 204508 / S288c) (Baker's yeast).